A 66-amino-acid polypeptide reads, in one-letter code: Ocellatin-PT2 (66 aa).

Positions 1-22 are cleaved as a signal peptide; it reads MAFLKKSLFLVLFLGLVSLSIC. Positions 23-39 are excised as a propeptide; sequence DEEKRQDEDDDDDDDEE. Val-66 carries the post-translational modification Valine amide.

As to expression, expressed by the skin glands.

It is found in the secreted. Functionally, has no antibacterial activity against Gram-negative bacteria E.coli ATCC 25922, S.pneumoniae ATCC 700603 and S.choleraesuis ATCC 14028 or against Gram-positive bacterium S.aureus ATCC 29313. Shows no hemolytic activity and no cytotoxicity. This is Ocellatin-PT2 from Leptodactylus pustulatus (Ceara white-lipped frog).